The primary structure comprises 828 residues: DNA gyrase subunit A (828 aa).

The region spanning 32 to 497 (LPDVRDGLKP…EVLSLEDEDL (466 aa)) is the Topo IIA-type catalytic domain. The active-site O-(5'-phospho-DNA)-tyrosine intermediate is tyrosine 120. The GyrA-box motif lies at 524–530 (QKRGGRG).

The protein belongs to the type II topoisomerase GyrA/ParC subunit family. Heterotetramer, composed of two GyrA and two GyrB chains. In the heterotetramer, GyrA contains the active site tyrosine that forms a transient covalent intermediate with DNA, while GyrB binds cofactors and catalyzes ATP hydrolysis.

The protein resides in the cytoplasm. The catalysed reaction is ATP-dependent breakage, passage and rejoining of double-stranded DNA.. In terms of biological role, a type II topoisomerase that negatively supercoils closed circular double-stranded (ds) DNA in an ATP-dependent manner to modulate DNA topology and maintain chromosomes in an underwound state. Negative supercoiling favors strand separation, and DNA replication, transcription, recombination and repair, all of which involve strand separation. Also able to catalyze the interconversion of other topological isomers of dsDNA rings, including catenanes and knotted rings. Type II topoisomerases break and join 2 DNA strands simultaneously in an ATP-dependent manner. The polypeptide is DNA gyrase subunit A (Streptococcus pyogenes serotype M1).